Reading from the N-terminus, the 424-residue chain is 2,3-bisphosphoglycerate-independent phosphoglycerate mutase (424 aa).

The protein belongs to the BPG-independent phosphoglycerate mutase family. A-PGAM subfamily.

The enzyme catalyses (2R)-2-phosphoglycerate = (2R)-3-phosphoglycerate. It functions in the pathway carbohydrate degradation; glycolysis; pyruvate from D-glyceraldehyde 3-phosphate: step 3/5. In terms of biological role, catalyzes the interconversion of 2-phosphoglycerate and 3-phosphoglycerate. The sequence is that of 2,3-bisphosphoglycerate-independent phosphoglycerate mutase from Aeropyrum pernix (strain ATCC 700893 / DSM 11879 / JCM 9820 / NBRC 100138 / K1).